Consider the following 213-residue polypeptide: Protein Flattop (213 aa).

The disordered stretch occupies residues 127 to 213 (VDQPAEQSKI…HNSRPASQEK (87 aa)). Residues 151–213 (QHIQDQSRPA…HNSRPASQEK (63 aa)) show a composition bias toward polar residues.

Belongs to the Flattop family.

It localises to the cytoplasm. It is found in the cytoskeleton. Its subcellular location is the cilium basal body. The protein resides in the cell projection. The protein localises to the cilium. It localises to the apical cell membrane. It is found in the cilium axoneme. Functionally, microtubule inner protein (MIP) part of the dynein-decorated doublet microtubules (DMTs) in cilia axoneme. Acts as a regulator of cilium basal body docking and positioning in mono- and multiciliated cells. Regulates basal body docking and cilia formation in multiciliated lung cells. Regulates kinocilium positioning and stereocilia bundle morphogenesis in the inner ear. This is Protein Flattop from Danio rerio (Zebrafish).